Here is a 156-residue protein sequence, read N- to C-terminus: MSWRRAASVGRRLVASGRILAGRRGAAGAAGSGMGNSTSSFWGKSTTTPVNQIQETISNNCVVIFSKTSCSYCSMAKKIFHDMNVNYKAVELDMLEYGNQFQDALHKMTGERTVPRIFVNGRFIGGAADTHRLHKEGKLLPLVHQCYLKKKQEERH.

The transit peptide at 1-19 (MSWRRAASVGRRLVASGRI) directs the protein to the mitochondrion. Positions 50 to 150 (VNQIQETISN…PLVHQCYLKK (101 aa)) constitute a Glutaredoxin domain. Cys61 contacts [2Fe-2S] cluster. Lys67 is a glutathione binding site. The residue at position 70 (Cys70) is an S-glutathionyl cysteine; alternate. The cysteines at positions 70 and 73 are disulfide-linked. Positions 102 and 114 each coordinate glutathione. Cys146 contributes to the [2Fe-2S] cluster binding site.

This sequence belongs to the glutaredoxin family. As to quaternary structure, monomer; active form. Homodimer; inactive form. The homodimer is probably linked by 1 2Fe-2S cluster. Widely expressed. Highly expressed in testis, and at much lower level in kidney and brain.

The protein resides in the mitochondrion. It is found in the nucleus. The 2Fe-2S present in the homodimer leads to inactivation of the enzyme. The 2Fe-2S may serve as a redox sensor: the presence of one-electron oxidants or reductants leading to the loss of the 2Fe-2S cluster, subsequent monomerization and activation of the enzyme. Its function is as follows. Glutathione-dependent oxidoreductase that facilitates the maintenance of mitochondrial redox homeostasis upon induction of apoptosis by oxidative stress. Involved in response to hydrogen peroxide and regulation of apoptosis caused by oxidative stress. Acts as a very efficient catalyst of monothiol reactions because of its high affinity for protein glutathione-mixed disulfides. Can receive electrons not only from glutathione (GSH), but also from thioredoxin reductase supporting both monothiol and dithiol reactions. Efficiently catalyzes both glutathionylation and deglutathionylation of mitochondrial complex I, which in turn regulates the superoxide production by the complex. Overexpression decreases the susceptibility to apoptosis and prevents loss of cardiolipin and cytochrome c release. The chain is Glutaredoxin-2, mitochondrial (Glrx2) from Mus musculus (Mouse).